A 511-amino-acid chain; its full sequence is Cytochrome P450 714C3 (511 aa).

The Lumenal portion of the chain corresponds to 1 to 6 (MEKLLA). The helical; Signal-anchor for type III membrane protein transmembrane segment at 7–27 (LIVVLVILLSLALFYLCNILW) threads the bilayer. Residues 28–511 (LRAVKIRKKL…GLPLMVTKLP (484 aa)) lie on the Cytoplasmic side of the membrane. Cysteine 458 contacts heme.

It belongs to the cytochrome P450 family. Heme is required as a cofactor.

It is found in the membrane. This chain is Cytochrome P450 714C3 (CYP714C3), found in Oryza sativa subsp. japonica (Rice).